We begin with the raw amino-acid sequence, 252 residues long: 2-succinyl-6-hydroxy-2,4-cyclohexadiene-1-carboxylate synthase (252 aa).

It belongs to the AB hydrolase superfamily. MenH family. As to quaternary structure, monomer.

The catalysed reaction is 5-enolpyruvoyl-6-hydroxy-2-succinyl-cyclohex-3-ene-1-carboxylate = (1R,6R)-6-hydroxy-2-succinyl-cyclohexa-2,4-diene-1-carboxylate + pyruvate. It functions in the pathway quinol/quinone metabolism; 1,4-dihydroxy-2-naphthoate biosynthesis; 1,4-dihydroxy-2-naphthoate from chorismate: step 3/7. It participates in quinol/quinone metabolism; menaquinone biosynthesis. Functionally, catalyzes a proton abstraction reaction that results in 2,5-elimination of pyruvate from 2-succinyl-5-enolpyruvyl-6-hydroxy-3-cyclohexene-1-carboxylate (SEPHCHC) and the formation of 2-succinyl-6-hydroxy-2,4-cyclohexadiene-1-carboxylate (SHCHC). In Escherichia fergusonii (strain ATCC 35469 / DSM 13698 / CCUG 18766 / IAM 14443 / JCM 21226 / LMG 7866 / NBRC 102419 / NCTC 12128 / CDC 0568-73), this protein is 2-succinyl-6-hydroxy-2,4-cyclohexadiene-1-carboxylate synthase.